The chain runs to 1221 residues: DNA-directed RNA polymerase subunit beta (1221 aa).

Residues 1176 to 1221 (EKKKLAEEEAEIAAEAEAEGSAEEDAAEADADANEAETADDDKASK) form a disordered region. A compositionally biased stretch (acidic residues) spans 1183-1215 (EEAEIAAEAEAEGSAEEDAAEADADANEAETAD).

The protein belongs to the RNA polymerase beta chain family. In terms of assembly, the RNAP catalytic core consists of 2 alpha, 1 beta, 1 beta' and 1 omega subunit. When a sigma factor is associated with the core the holoenzyme is formed, which can initiate transcription.

The enzyme catalyses RNA(n) + a ribonucleoside 5'-triphosphate = RNA(n+1) + diphosphate. Its function is as follows. DNA-dependent RNA polymerase catalyzes the transcription of DNA into RNA using the four ribonucleoside triphosphates as substrates. The protein is DNA-directed RNA polymerase subunit beta of Lactobacillus delbrueckii subsp. bulgaricus (strain ATCC BAA-365 / Lb-18).